The chain runs to 190 residues: MGLLDAKISNHNVLVTSVDNVLNWARLSSLWPMGFGLACCAIEMMATNASNYDLERFGIFPRSSPRQSDLMIVAGTVTMKMAERVIRLYEQMPEPRYVLSMGSCSNCGGPYWKHGYHVLKGVDRIIPVDVYVPGCPPRPEALIGGLMKVQELIRMEQIGISRAEALKKLEEKSFDPGIVLEHQRKSQAVS.

Residues cysteine 39, cysteine 40, cysteine 104, and cysteine 135 each contribute to the [4Fe-4S] cluster site.

It belongs to the complex I 20 kDa subunit family. As to quaternary structure, NDH-1 is composed of 14 different subunits. Subunits NuoB, C, D, E, F, and G constitute the peripheral sector of the complex. [4Fe-4S] cluster serves as cofactor.

It is found in the cell inner membrane. The enzyme catalyses a quinone + NADH + 5 H(+)(in) = a quinol + NAD(+) + 4 H(+)(out). Functionally, NDH-1 shuttles electrons from NADH, via FMN and iron-sulfur (Fe-S) centers, to quinones in the respiratory chain. The immediate electron acceptor for the enzyme in this species is believed to be a menaquinone. Couples the redox reaction to proton translocation (for every two electrons transferred, four hydrogen ions are translocated across the cytoplasmic membrane), and thus conserves the redox energy in a proton gradient. This is NADH-quinone oxidoreductase subunit B from Prosthecochloris aestuarii (strain DSM 271 / SK 413).